The primary structure comprises 231 residues: LexA repressor (231 aa).

A DNA-binding region (H-T-H motif) is located at residues 26-46 (FEEMKEALDLKSKSGIHRLIG). Residues Ser-152 and Lys-190 each act as for autocatalytic cleavage activity in the active site.

Belongs to the peptidase S24 family. In terms of assembly, homodimer.

The catalysed reaction is Hydrolysis of Ala-|-Gly bond in repressor LexA.. Represses a number of genes involved in the response to DNA damage (SOS response), including recA and lexA. In the presence of single-stranded DNA, RecA interacts with LexA causing an autocatalytic cleavage which disrupts the DNA-binding part of LexA, leading to derepression of the SOS regulon and eventually DNA repair. This chain is LexA repressor, found in Acidiphilium cryptum (strain JF-5).